Reading from the N-terminus, the 463-residue chain is L-seryl-tRNA(Sec) selenium transferase (463 aa).

Residue Lys295 is modified to N6-(pyridoxal phosphate)lysine.

It belongs to the SelA family. In terms of assembly, homodecamer; pentamer of dimers. Binds only one seryl-tRNA(Sec) per dimer. Pyridoxal 5'-phosphate is required as a cofactor.

The protein localises to the cytoplasm. It catalyses the reaction L-seryl-tRNA(Sec) + selenophosphate + H(+) = L-selenocysteinyl-tRNA(Sec) + phosphate. The protein operates within aminoacyl-tRNA biosynthesis; selenocysteinyl-tRNA(Sec) biosynthesis; selenocysteinyl-tRNA(Sec) from L-seryl-tRNA(Sec) (bacterial route): step 1/1. In terms of biological role, converts seryl-tRNA(Sec) to selenocysteinyl-tRNA(Sec) required for selenoprotein biosynthesis. The sequence is that of L-seryl-tRNA(Sec) selenium transferase from Edwardsiella ictaluri (strain 93-146).